We begin with the raw amino-acid sequence, 539 residues long: AT-rich interactive domain-containing protein 3A (539 aa).

Residues 1 to 190 (MKLQAVMETL…PLSGHPQLQD (190 aa)) are disordered. Low complexity predominate over residues 55–73 (LKIQRAQAAALAAMRAAAA). Residues 84–100 (SEEEDGESMASDEEDEK) are compositionally biased toward acidic residues. A compositionally biased stretch (basic and acidic residues) spans 101–110 (ERDGESERYQ). Residues 113-141 (ASEEEDLKGKWDEDDFEDEGEDEYEDMEE) are compositionally biased toward acidic residues. Positions 161–173 (HSSQQAFPSQRSQ) are enriched in polar residues. In terms of domain architecture, ARID spans 209–301 (DPKRKEFLDD…YLYPYECEKR (93 aa)). The REKLES domain maps to 404 to 499 (AALEQLREKL…GVLFAQPPTS (96 aa)). The interval 405–448 (ALEQLREKLESGEPPEKKMALGSEEQQRIIQRTIQHNLLAMTAQ) is important for nuclear localization. Residues 450–471 (PMNIRINSQAEGRQDSAVNLTT) are homodimerization. Residues 495–502 (QPPTSASG) form an important for cytoplasmic localization region. Residues 497–512 (PTSASGTSKGSSNRTG) show a composition bias toward polar residues. A disordered region spans residues 497 to 539 (PTSASGTSKGSSNRTGSIGGGSSNSQAAPPSTPSAPNSNNPSP). The segment covering 519–539 (SNSQAAPPSTPSAPNSNNPSP) has biased composition (low complexity).

Homodimer.

The protein resides in the nucleus. It localises to the cytoplasm. Its function is as follows. Transcription factor required for smad1 and smad2-mediated responses to TGFbeta during mesoderm induction. The sequence is that of AT-rich interactive domain-containing protein 3A (arid3a) from Xenopus laevis (African clawed frog).